The sequence spans 301 residues: 2-aminobenzoylacetyl-CoA thioesterase (301 aa).

7 residues coordinate Fe cation: His-69, His-71, Asp-73, His-74, His-159, Asp-178, and His-221.

The protein belongs to the metallo-beta-lactamase superfamily.

It catalyses the reaction (2-aminobenzoyl)acetyl-CoA + H2O = (2-aminobenzoyl)acetate + CoA + H(+). With respect to regulation, thioesterase activity, but not pyocyanine production, is inhibited by 2-(pyridin-3-yl)benzoic acid, 2-(1H-pyrrol-1-yl)benzoic acid and 3-methylthiophene-2-carboxylic acid. Compounds bind to the active center. Its function is as follows. Required for the biosynthesis of the quorum-sensing signaling molecules 2-heptyl-4(1H)-quinolone (HHQ) and 2-heptyl-3-hydroxy-4(1H)-quinolone (Pseudomonas quinolone signal or PQS), which are important for biofilm formation and virulence. Catalyzes the hydrolysis of the intermediate 2-aminobenzoylacetyl-CoA (2-ABA-CoA) to form 2-aminobenzoylacetate (2-ABA), the precursor of HHQ. In vitro, can also hydrolyze other substrates such as S-ethyl-acetothioacetate and acetoacetyl-CoA, but is inactive against anthraniloyl-CoA, malonyl-CoA and octanoyl-CoA. Beyond its thioesterase function, is involved in the regulation of diverse genes coding for key virulence determinants and biofilm development. The protein is 2-aminobenzoylacetyl-CoA thioesterase of Pseudomonas aeruginosa (strain ATCC 15692 / DSM 22644 / CIP 104116 / JCM 14847 / LMG 12228 / 1C / PRS 101 / PAO1).